Reading from the N-terminus, the 288-residue chain is ATP synthase subunit a (288 aa).

6 helical membrane-spanning segments follow: residues 47-67 (LDSM…FWMV), 104-124 (LIAP…LMDL), 157-177 (DPNI…FYSI), 199-219 (PIVQ…TLIA), 237-257 (LIFI…SVPW), and 258-278 (AIFH…LTIV).

It belongs to the ATPase A chain family. F-type ATPases have 2 components, CF(1) - the catalytic core - and CF(0) - the membrane proton channel. CF(1) has five subunits: alpha(3), beta(3), gamma(1), delta(1), epsilon(1). CF(0) has three main subunits: a(1), b(2) and c(9-12). The alpha and beta chains form an alternating ring which encloses part of the gamma chain. CF(1) is attached to CF(0) by a central stalk formed by the gamma and epsilon chains, while a peripheral stalk is formed by the delta and b chains.

It localises to the cell inner membrane. Key component of the proton channel; it plays a direct role in the translocation of protons across the membrane. The polypeptide is ATP synthase subunit a (Psychrobacter cryohalolentis (strain ATCC BAA-1226 / DSM 17306 / VKM B-2378 / K5)).